Consider the following 497-residue polypeptide: Probable malate:quinone oxidoreductase (497 aa).

This sequence belongs to the MQO family. FAD is required as a cofactor.

It carries out the reaction (S)-malate + a quinone = a quinol + oxaloacetate. It functions in the pathway carbohydrate metabolism; tricarboxylic acid cycle; oxaloacetate from (S)-malate (quinone route): step 1/1. This is Probable malate:quinone oxidoreductase from Prochlorococcus marinus subsp. pastoris (strain CCMP1986 / NIES-2087 / MED4).